The chain runs to 451 residues: Tubby-like F-box protein 12 (451 aa).

Residues 57–112 enclose the F-box domain; the sequence is SRWVGLPPELLRDVMKRLEEGESNWPSRKDVVACAAVCRTWREICKDIVQSPEICG. Residues 387–406 show a composition bias toward low complexity; that stretch reads LEQQQQQQQQNHASSSSSAS. Residues 387 to 407 form a disordered region; sequence LEQQQQQQQQNHASSSSSASD.

This sequence belongs to the TUB family. Ubiquitous.

This is Tubby-like F-box protein 12 (TULP12) from Oryza sativa subsp. japonica (Rice).